We begin with the raw amino-acid sequence, 110 residues long: PHD finger-like domain-containing protein 5B (110 aa).

This sequence belongs to the PHF5 family.

In Arabidopsis thaliana (Mouse-ear cress), this protein is PHD finger-like domain-containing protein 5B.